We begin with the raw amino-acid sequence, 200 residues long: ATP-dependent Clp protease proteolytic subunit 2 (200 aa).

Residue Ser99 is the Nucleophile of the active site. Residue His124 is part of the active site.

The protein belongs to the peptidase S14 family. Fourteen ClpP subunits assemble into 2 heptameric rings which stack back to back to give a disk-like structure with a central cavity, resembling the structure of eukaryotic proteasomes.

It localises to the cytoplasm. It carries out the reaction Hydrolysis of proteins to small peptides in the presence of ATP and magnesium. alpha-casein is the usual test substrate. In the absence of ATP, only oligopeptides shorter than five residues are hydrolyzed (such as succinyl-Leu-Tyr-|-NHMec, and Leu-Tyr-Leu-|-Tyr-Trp, in which cleavage of the -Tyr-|-Leu- and -Tyr-|-Trp bonds also occurs).. Its function is as follows. Cleaves peptides in various proteins in a process that requires ATP hydrolysis. Has a chymotrypsin-like activity. Plays a major role in the degradation of misfolded proteins. The sequence is that of ATP-dependent Clp protease proteolytic subunit 2 from Treponema denticola (strain ATCC 35405 / DSM 14222 / CIP 103919 / JCM 8153 / KCTC 15104).